Reading from the N-terminus, the 612-residue chain is Bile salt-activated lipase (612 aa).

Residues 1-20 (MGRLEVLFLGLTCCLAAACA) form the signal peptide. Cysteines 84 and 100 form a disulfide. Asparagine 207 carries an N-linked (GlcNAc...) asparagine glycan. The Acyl-ester intermediate role is filled by serine 214. The cysteines at positions 266 and 277 are disulfide-linked. Residues aspartate 340 and histidine 455 each act as charge relay system in the active site. The segment at 553 to 612 (VGDHTPPEDDSEAAPVPPTDDSQGGPVPPTDDSQTTPVPPTDNSQAGDSVEAQMPGPIGF) is disordered. 4 repeat units span residues 556 to 566 (HTPPEDDSEAA), 567 to 577 (PVPPTDDSQGG), 578 to 588 (PVPPTDDSQTT), and 589 to 599 (PVPPTDNSQAG). Positions 556–599 (HTPPEDDSEAAPVPPTDDSQGGPVPPTDDSQTTPVPPTDNSQAG) are 4 X 11 AA tandem repeats, O-glycosylated region. Positions 583 to 599 (DDSQTTPVPPTDNSQAG) are enriched in polar residues.

The protein belongs to the type-B carboxylesterase/lipase family. Interacts with CLC. As to expression, synthesized primarily in the pancreas and then transported to the intestine.

The protein resides in the secreted. The enzyme catalyses a triacylglycerol + H2O = a diacylglycerol + a fatty acid + H(+). It catalyses the reaction 1,2,3-tri-(9Z-octadecenoyl)-glycerol + H2O = di-(9Z)-octadecenoylglycerol + (9Z)-octadecenoate + H(+). It carries out the reaction 1,2,3-trioctanoylglycerol + H2O = dioctanoylglycerol + octanoate + H(+). The catalysed reaction is a sterol ester + H2O = a sterol + a fatty acid + H(+). The enzyme catalyses cholesteryl (9Z-octadecenoate) + H2O = cholesterol + (9Z)-octadecenoate + H(+). It catalyses the reaction an acetyl ester + H2O = an aliphatic alcohol + acetate + H(+). It carries out the reaction a butanoate ester + H2O = an aliphatic alcohol + butanoate + H(+). The catalysed reaction is 9-hexadecanoyloxy-octadecanoate + H2O = 9-hydroxy-octadecanoate + hexadecanoate + H(+). The enzyme catalyses 9-(9Z-octadecenoyloxy)-octadecanoate + H2O = 9-hydroxy-octadecanoate + (9Z)-octadecenoate + H(+). It catalyses the reaction 1-hexadecanoyl-sn-glycero-3-phosphocholine + H2O = sn-glycerol 3-phosphocholine + hexadecanoate + H(+). It carries out the reaction 12-hexadecanoyloxy-octadecanoate + H2O = 12-hydroxyoctadecanoate + hexadecanoate + H(+). The catalysed reaction is 12-(9Z-octadecenoyloxy)-octadecanoate + H2O = 12-hydroxyoctadecanoate + (9Z)-octadecenoate + H(+). The enzyme catalyses 13-(9Z-octadecenoyloxy)-octadecanoate + H2O = 13-hydroxy-octadecanoate + (9Z)-octadecenoate + H(+). It catalyses the reaction 9-(9Z-hexadecenoyloxy)-octadecanoate + H2O = (9Z)-hexadecenoate + 9-hydroxy-octadecanoate + H(+). It carries out the reaction 12-(9Z-hexadecenoyloxy)-octadecanoate + H2O = 12-hydroxyoctadecanoate + (9Z)-hexadecenoate + H(+). The catalysed reaction is 13-(9Z-hexadecenoyloxy)-octadecanoate + H2O = 13-hydroxy-octadecanoate + (9Z)-hexadecenoate + H(+). The enzyme catalyses 12-octadecanoyloxy-octadecanoate + H2O = 12-hydroxyoctadecanoate + octadecanoate + H(+). It catalyses the reaction 13-octadecanoyloxy-octadecanoate + H2O = 13-hydroxy-octadecanoate + octadecanoate + H(+). It carries out the reaction 5-(9Z-hexadecenoyloxy)-octadecanoate + H2O = 5-hydroxy-octadecanoate + (9Z)-hexadecenoate + H(+). The catalysed reaction is 9-octadecanoyloxy-octadecanoate + H2O = 9-hydroxy-octadecanoate + octadecanoate + H(+). Its activity is regulated as follows. Activated by bile salts such as sodium taurocholate. In terms of biological role, catalyzes the hydrolysis of a wide range of substrates including cholesteryl esters, phospholipids, lysophospholipids, di- and tri-acylglycerols, and fatty acid esters of hydroxy fatty acids (FAHFA). Preferentially hydrolyzes FAHFAs with the ester bond further away from the carboxylate. Unsaturated FAHFAs are hydrolyzed more quickly than saturated FAHFAs. Has an essential role in the complete digestion of dietary lipids and their intestinal absorption, along with the absorption of fat-soluble vitamins. This Rattus norvegicus (Rat) protein is Bile salt-activated lipase (Cel).